The following is a 721-amino-acid chain: Polyribonucleotide nucleotidyltransferase (721 aa).

The Mg(2+) site is built by D487 and D493. The KH domain maps to 554–613; sequence PRIETFKIPTDKIREVIGTGGKVIREIVEKTGAKVNIDDDGTVKVASSDGESIKAAIKWI. Residues 623–691 enclose the S1 motif domain; the sequence is NAIYDGTVVK…DRGKTRLSMK (69 aa). Residues 697–721 are disordered; sequence TGEDLEAKQKAEAEKAKAEGAPAAE. The segment covering 701–714 has biased composition (basic and acidic residues); it reads LEAKQKAEAEKAKA.

Belongs to the polyribonucleotide nucleotidyltransferase family. Requires Mg(2+) as cofactor.

The protein resides in the cytoplasm. It catalyses the reaction RNA(n+1) + phosphate = RNA(n) + a ribonucleoside 5'-diphosphate. Functionally, involved in mRNA degradation. Catalyzes the phosphorolysis of single-stranded polyribonucleotides processively in the 3'- to 5'-direction. This is Polyribonucleotide nucleotidyltransferase from Rhodopseudomonas palustris (strain BisA53).